The sequence spans 23 residues: VWLSALKFIGKHLAKHQLSKLGR.

Leucine 21 carries the leucine amide modification.

Expressed by the venom gland.

Its subcellular location is the secreted. The protein localises to the target cell membrane. Its function is as follows. Has strong antibacterial activity and biofilm inhibition effects against Gram-positive and -negative bacteria including E.coli, S.epidermidis, and A.baumannii and oxacillin-resistant S.aureus and meropenem-resistant P.aeruginosa. Is not cytotoxic against human foreskin fibroblast Hs27 or hemolytic against mammalian red blood cells. Its mechanism of action involves binding to lipoteichoic acid and lipopolysaccharide of Gram-positive and Gram-negative bacterial membranes, respectively, to destroy the bacterial membrane. In addition, it shows anti-inflammatory effects by inhibiting the expression of pro-inflammatory cytokines that are increased during bacterial infection in Hs27 cells. The protein is Lycosin-II of Lycosa singoriensis (Wolf spider).